Here is a 156-residue protein sequence, read N- to C-terminus: S-ribosylhomocysteine lyase (156 aa).

Fe cation-binding residues include histidine 56, histidine 60, and cysteine 123.

The protein belongs to the LuxS family. Homodimer. The cofactor is Fe cation.

It carries out the reaction S-(5-deoxy-D-ribos-5-yl)-L-homocysteine = (S)-4,5-dihydroxypentane-2,3-dione + L-homocysteine. Functionally, involved in the synthesis of autoinducer 2 (AI-2) which is secreted by bacteria and is used to communicate both the cell density and the metabolic potential of the environment. The regulation of gene expression in response to changes in cell density is called quorum sensing. Catalyzes the transformation of S-ribosylhomocysteine (RHC) to homocysteine (HC) and 4,5-dihydroxy-2,3-pentadione (DPD). The polypeptide is S-ribosylhomocysteine lyase (Staphylococcus aureus (strain bovine RF122 / ET3-1)).